The following is a 228-amino-acid chain: Tumor necrosis factor receptor superfamily member 18 (228 aa).

The N-terminal stretch at 1 to 19 (MGAWAMLYGVSMLCVLDLG) is a signal peptide. The Extracellular portion of the chain corresponds to 20 to 153 (QPSVVEEPGC…EPLPTEQYGH (134 aa)). TNFR-Cys repeat units lie at residues 28–61 (GCGP…ERCI), 62–101 (CVTP…FRCV), and 102–142 (ACAM…AVCI). Cystine bridges form between cysteine 29-cysteine 44, cysteine 62-cysteine 74, cysteine 69-cysteine 82, cysteine 103-cysteine 122, and cysteine 116-cysteine 141. N-linked (GlcNAc...) asparagine glycans are attached at residues asparagine 36 and asparagine 40. Asparagine 121 and asparagine 134 each carry an N-linked (GlcNAc...) asparagine glycan. The chain crosses the membrane as a helical span at residues 154–174 (LTVIFLVMAACIFFLTTVQLG). The Cytoplasmic portion of the chain corresponds to 175-228 (LHIWQLRRQHMCPRETQPFAEVQLSAEDACSFQFPEEERGEQTEEKCHLGGRWP).

In terms of assembly, binds to TRAF1, TRAF2, and TRAF3, but not TRAF5 and TRAF6. Binds through its C-terminus to SIVA1/SIVA. In terms of tissue distribution, preferentially expressed in activated T lymphocytes.

The protein localises to the cell membrane. It localises to the secreted. In terms of biological role, receptor for TNFSF18. Seems to be involved in interactions between activated T-lymphocytes and endothelial cells and in the regulation of T-cell receptor-mediated cell death. Mediated NF-kappa-B activation via the TRAF2/NIK pathway. This chain is Tumor necrosis factor receptor superfamily member 18 (Tnfrsf18), found in Mus musculus (Mouse).